Here is a 944-residue protein sequence, read N- to C-terminus: Bifunctional uridylyltransferase/uridylyl-removing enzyme (944 aa).

Residues 1-371 (MRDLDFTNIL…RFTHRNRKIA (371 aa)) are uridylyltransferase. A uridylyl-removing region spans residues 372–727 (GSVEFVEDRG…VRTDSFHAIT (356 aa)). The HD domain occupies 488-604 (VDEHLIRTVD…TDFADRVQSL (117 aa)). 2 consecutive ACT domains span residues 728–809 (EITV…EVIA) and 839–918 (VIEV…LRER). Residues 911-944 (EEDELRERMPSGIIAPAATARTPPASEKKAGSPI) are disordered. A compositionally biased stretch (low complexity) spans 925–935 (APAATARTPPA).

It belongs to the GlnD family. Mg(2+) is required as a cofactor.

It carries out the reaction [protein-PII]-L-tyrosine + UTP = [protein-PII]-uridylyl-L-tyrosine + diphosphate. The enzyme catalyses [protein-PII]-uridylyl-L-tyrosine + H2O = [protein-PII]-L-tyrosine + UMP + H(+). Uridylyltransferase (UTase) activity is inhibited by glutamine, while glutamine likely activates uridylyl-removing (UR) activity. Modifies, by uridylylation and deuridylylation, the PII regulatory proteins GlnB and GlnK, in response to the nitrogen status of the cell that GlnD senses through the glutamine level. Under low glutamine levels, catalyzes the conversion of the PII proteins and UTP to PII-UMP and PPi, while under higher glutamine levels, GlnD likely hydrolyzes PII-UMP to PII and UMP (deuridylylation). Thus, controls uridylylation state and activity of the PII proteins, and plays an important role in the regulation of nitrogen metabolism. The chain is Bifunctional uridylyltransferase/uridylyl-removing enzyme from Rhizobium leguminosarum bv. viciae.